The chain runs to 268 residues: MAEQTIAQALMLGVLEGFTEFIPVSSTGHILLAGHFLGFQSTGKAFEILIQLGAILAVLSVYAGRLWKMLIELPHEPATRRFVLGILIAFLPAAIIGVVAYQIIKTVLFETPLLICTMLILGGIVLLWVDRWAKKPLYRDITQFPLSVYLKIGLFQCLSMIPGTSRSGSTIVGALLLGVDKRAAAEFSFFLAMPTMAGAFAYDLYKNYHLLTAADLQIIGVGFIAAFVAAVLVVRSLLDFVSRRGYALFGWWRIFIGVLGLIGVLVLG.

Transmembrane regions (helical) follow at residues 5-25 (TIAQ…IPVS), 43-63 (GKAF…SVYA), 84-104 (LGIL…YQII), 107-127 (VLFE…IVLL), 184-204 (AAEF…AYDL), 214-234 (ADLQ…VLVV), and 247-267 (ALFG…VLVL).

It belongs to the UppP family.

The protein localises to the cell inner membrane. The catalysed reaction is di-trans,octa-cis-undecaprenyl diphosphate + H2O = di-trans,octa-cis-undecaprenyl phosphate + phosphate + H(+). In terms of biological role, catalyzes the dephosphorylation of undecaprenyl diphosphate (UPP). Confers resistance to bacitracin. The sequence is that of Undecaprenyl-diphosphatase from Chelativorans sp. (strain BNC1).